Consider the following 259-residue polypeptide: Phosphatidylglycerol--prolipoprotein diacylglyceryl transferase (259 aa).

Helical transmembrane passes span leucine 9 to valine 29, aspartate 48 to phenylalanine 68, isoleucine 83 to isoleucine 103, aspartate 114 to glycine 133, threonine 167 to leucine 187, glycine 197 to methionine 217, and leucine 227 to isoleucine 247. Position 131 (arginine 131) interacts with a 1,2-diacyl-sn-glycero-3-phospho-(1'-sn-glycerol).

It belongs to the Lgt family.

Its subcellular location is the cell membrane. The enzyme catalyses L-cysteinyl-[prolipoprotein] + a 1,2-diacyl-sn-glycero-3-phospho-(1'-sn-glycerol) = an S-1,2-diacyl-sn-glyceryl-L-cysteinyl-[prolipoprotein] + sn-glycerol 1-phosphate + H(+). Its pathway is protein modification; lipoprotein biosynthesis (diacylglyceryl transfer). In terms of biological role, catalyzes the transfer of the diacylglyceryl group from phosphatidylglycerol to the sulfhydryl group of the N-terminal cysteine of a prolipoprotein, the first step in the formation of mature lipoproteins. The chain is Phosphatidylglycerol--prolipoprotein diacylglyceryl transferase from Streptococcus mutans serotype c (strain ATCC 700610 / UA159).